Here is a 347-residue protein sequence, read N- to C-terminus: GMP reductase (347 aa).

108–131 contacts NADP(+); it reads ADFEKTKQILDLNPALNFVCIDVA. G181 and G183 together coordinate K(+). C186 functions as the Thioimidate intermediate in the catalytic mechanism. 216 to 239 provides a ligand contact to NADP(+); it reads IVSDGGCTTPGDVAKAFGGGADFV.

This sequence belongs to the IMPDH/GMPR family. GuaC type 1 subfamily. As to quaternary structure, homotetramer.

The catalysed reaction is IMP + NH4(+) + NADP(+) = GMP + NADPH + 2 H(+). In terms of biological role, catalyzes the irreversible NADPH-dependent deamination of GMP to IMP. It functions in the conversion of nucleobase, nucleoside and nucleotide derivatives of G to A nucleotides, and in maintaining the intracellular balance of A and G nucleotides. This chain is GMP reductase, found in Escherichia coli O139:H28 (strain E24377A / ETEC).